The primary structure comprises 210 residues: Thymidylate kinase (210 aa).

9–16 (GPEGAGKT) is a binding site for ATP.

The protein belongs to the thymidylate kinase family.

It catalyses the reaction dTMP + ATP = dTDP + ADP. Functionally, phosphorylation of dTMP to form dTDP in both de novo and salvage pathways of dTTP synthesis. This is Thymidylate kinase from Thermomicrobium roseum (strain ATCC 27502 / DSM 5159 / P-2).